A 287-amino-acid chain; its full sequence is Ret finger protein-like 4A (287 aa).

An RING-type; degenerate zinc finger spans residues 11-53; the sequence is CPVCLKDLEEAVQLKCGYACCLQCLNSLQKEPDGEGLLCRFCS. The B30.2/SPRY domain occupies 78–276; the sequence is EPKLKSVLTM…LSICSVINPS (199 aa).

As to quaternary structure, interacts with PSMB1, UBE2A and CCNB1.

The protein resides in the cytoplasm. It localises to the nucleus. This Homo sapiens (Human) protein is Ret finger protein-like 4A (RFPL4A).